The chain runs to 248 residues: Protein PIMREG (248 aa).

A compositionally biased stretch (polar residues) spans 1-10 (MASRWQNMGT). Positions 1 to 32 (MASRWQNMGTSVRRRSLQHQEQLEDSKELQPV) are disordered. Phosphoserine occurs at positions 11 and 16. Short sequence motifs (D-box) lie at residues 14–17 (RRSL) and 53–56 (RLPL). The disordered stretch occupies residues 117–205 (KARRRKRGAQ…PSESDSDLEP (89 aa)). A Phosphoserine modification is found at serine 129. Position 131 is a phosphoserine; by UHMK1; in vitro (serine 131). Polar residues-rich tracts occupy residues 132–143 (PTHSLSQKSTRL) and 186–198 (PYSS…SPSE). Phosphoserine occurs at positions 199 and 201.

In terms of assembly, isoform 1 and isoform 2 interact with PICALM; this interaction may target PICALM to the nucleus. During mitosis, associates with HDAC2 and MTA2 subunits of the chromatin-remodeling NuRD complex; this association is strongest at prometaphase and decreases as the cell progresses through metaphase and anaphase. Post-translationally, ubiquitinated by the anaphase-promoting complex/cyclosome (APC/C) complex in the presence of FZR1, leading to its degradation by the proteasome during mitotic exit. However, degradation is not essential for normal mitotic progression within a single cell cycle. Expressed in thymus (at protein level). Detected in spleen, colon, ovary and small intestines.

It is found in the nucleus. Its subcellular location is the nucleolus. Functionally, during mitosis, may play a role in the control of metaphase-to-anaphase transition. The protein is Protein PIMREG of Homo sapiens (Human).